The following is a 244-amino-acid chain: Small ribosomal subunit protein eS4 (244 aa).

The 64-residue stretch at 43-106 (LPLLLVVRDI…DENYLVLFDE (64 aa)) folds into the S4 RNA-binding domain.

This sequence belongs to the eukaryotic ribosomal protein eS4 family.

The sequence is that of Small ribosomal subunit protein eS4 from Methanococcus maripaludis (strain C6 / ATCC BAA-1332).